The sequence spans 875 residues: Probable inorganic carbon transporter subunit DabA (875 aa).

Residues C399, D401, H581, and C596 each contribute to the Zn(2+) site.

The protein belongs to the inorganic carbon transporter (TC 9.A.2) DabA family. In terms of assembly, forms a complex with DabB. Zn(2+) serves as cofactor.

It is found in the cell membrane. Its function is as follows. Part of an energy-coupled inorganic carbon pump. This is Probable inorganic carbon transporter subunit DabA from Bacillus thuringiensis (strain Al Hakam).